A 79-amino-acid polypeptide reads, in one-letter code: Large ribosomal subunit protein bL31 (79 aa).

Belongs to the bacterial ribosomal protein bL31 family. Type A subfamily. As to quaternary structure, part of the 50S ribosomal subunit.

In terms of biological role, binds the 23S rRNA. The sequence is that of Large ribosomal subunit protein bL31 from Synechococcus sp. (strain CC9902).